A 298-amino-acid chain; its full sequence is Protease HtpX homolog (298 aa).

The next 2 membrane-spanning stretches (helical) occupy residues 14-34 (VVLL…AGYL) and 39-59 (YAMG…SMIF). Zn(2+) is bound at residue His-143. Glu-144 is a catalytic residue. His-147 contributes to the Zn(2+) binding site. Transmembrane regions (helical) follow at residues 158–178 (IAVA…RMLW) and 197–217 (IITL…ASLI). Glu-226 lines the Zn(2+) pocket.

It belongs to the peptidase M48B family. The cofactor is Zn(2+).

It localises to the cell membrane. The chain is Protease HtpX homolog from Streptococcus pyogenes serotype M6 (strain ATCC BAA-946 / MGAS10394).